A 219-amino-acid polypeptide reads, in one-letter code: Ribosome hibernation promotion factor (219 aa).

Belongs to the HPF/YfiA ribosome-associated protein family. Long HPF subfamily. Interacts with 100S ribosomes.

The protein localises to the cytoplasm. Functionally, required for dimerization of active 70S ribosomes into 100S ribosomes in stationary phase; 100S ribosomes are translationally inactive and sometimes present during exponential growth. The protein is Ribosome hibernation promotion factor of Mycobacterium tuberculosis (strain ATCC 25618 / H37Rv).